The sequence spans 345 residues: Aminopeptidase YpdE (345 aa).

Positions 62 and 166 each coordinate a divalent metal cation. Glu-198 (proton acceptor) is an active-site residue. A divalent metal cation contacts are provided by Glu-199, Asp-221, and His-308.

The protein belongs to the peptidase M42 family. Co(2+) serves as cofactor. Ni(2+) is required as a cofactor. Requires Mn(2+) as cofactor. The cofactor is Cu(2+).

In terms of biological role, has a broad aminopeptidase activity on non-blocked peptides by progressively cleaving amino acids off the peptide substrate. Aminopeptidase activity stops at the residue before the first proline in the peptide. Cannot cleave when proline is the first N-terminal residue. This chain is Aminopeptidase YpdE (ypdE), found in Escherichia coli (strain K12).